The chain runs to 212 residues: Agamous-like MADS-box protein MADS9 (212 aa).

The MADS-box domain occupies M1–S61. Residues H84–P170 enclose the K-box domain.

Expressed during flower development in stamens and petals.

It is found in the nucleus. In terms of biological role, probable transcription factor that may play role in specifying stamen and petal organ identity. This is Agamous-like MADS-box protein MADS9 from Vitis vinifera (Grape).